We begin with the raw amino-acid sequence, 63 residues long: Large ribosomal subunit protein bL28 (63 aa).

The protein belongs to the bacterial ribosomal protein bL28 family.

The polypeptide is Large ribosomal subunit protein bL28 (rpmB) (Selenomonas ruminantium).